The primary structure comprises 318 residues: Olfactory receptor 5G25 (318 aa).

At 1 to 25 (MMHRNQTVVTEFFFTGLTSSFHLQI) the chain is on the extracellular side. An N-linked (GlcNAc...) asparagine glycan is attached at Asn5. Residues 26–46 (VLFLTFLCVYLATLLGNLGMI) traverse the membrane as a helical segment. The Cytoplasmic segment spans residues 47–54 (ILIHQDTR). Residues 55–75 (LHIPMYFFLSHLSFVDACSSS) traverse the membrane as a helical segment. At 76–99 (VISPKMLSDIFVDKKVISFLGCAI) the chain is on the extracellular side. Cys97 and Cys189 are disulfide-bonded. The chain crosses the membrane as a helical span at residues 100–120 (QFCLFSQFVVTECFLLASMAY). Topologically, residues 121–133 (DRYVAICKPLLYT) are cytoplasmic. A helical transmembrane segment spans residues 134-154 (LIMSQRVCVQLVIGPYSIGLI). Topologically, residues 155-196 (STVVHTTSAFILPYCGPNLINHFFCDLLPVLSLACADTQMNK) are extracellular. A helical membrane pass occupies residues 197-217 (HLLFIMAGILGVFSGIIILVS). Residues 218-237 (YVYIAITILKINSADGRRKA) lie on the Cytoplasmic side of the membrane. Residues 238 to 258 (FSTCSSHLTAVSILYGTLFFI) traverse the membrane as a helical segment. Over 259–271 (YVRPSSSFSLDIN) the chain is Extracellular. Residues 272-292 (KVVSLFYTAVIPMLNPFIYSL) traverse the membrane as a helical segment. Residues 293 to 318 (RNKEVKDALIRTFEKKFCYSLQDKIL) are Cytoplasmic-facing.

Belongs to the G-protein coupled receptor 1 family.

The protein resides in the cell membrane. In terms of biological role, potential odorant receptor. The protein is Olfactory receptor 5G25 of Mus musculus (Mouse).